The primary structure comprises 1091 residues: TATA element modulatory factor (1091 aa).

Disordered stretches follow at residues 42-86 and 100-280; these read IPYG…KPVR and FLSP…DAKS. The span at 57–81 shows a compositional bias: polar residues; sequence WDTSTWGLNSTSSEPQSPPTASQAI. Phosphoserine occurs at positions 73, 78, 112, and 136. Composition is skewed to low complexity over residues 111 to 122, 131 to 142, and 194 to 211; these read KSPVVSKPPSKS, SSLQESSSPGQS, and SENVVNVNTTEDVSTTST. Ser-213 carries the phosphoserine modification. A compositionally biased stretch (basic and acidic residues) spans 217–234; sequence ETKDMALEPKEQKHEDRQ. Low complexity-rich tracts occupy residues 242–253 and 264–273; these read VSSFSSGTSTTS and ISESSASSRQ. A phosphoserine mark is found at Ser-324, Ser-326, Ser-329, Ser-334, Ser-340, and Ser-357. The tract at residues 329-338 is interaction with Elongin BC complex; that stretch reads SLDSRSVSEI. A disordered region spans residues 360-443; that stretch reads TPKTKVVEST…NQPKAPPEKE (84 aa). Over residues 368-379 the composition is skewed to acidic residues; that stretch reads STEENAEEEEGN. Phosphoserine occurs at positions 411 and 540. 2 coiled-coil regions span residues 443-767 and 824-894; these read EDVC…STAR and IQMS…SQLE. 2 positions are modified to phosphoserine: Ser-923 and Ser-926. Thr-927 carries the post-translational modification Phosphothreonine. Residue Ser-931 is modified to Phosphoserine. Residues 984 to 1090 are a coiled coil; the sequence is IENLQSQLKL…QIDELLRQRL (107 aa).

In terms of assembly, component of the SNF/SWI transcription factor complexes. Interacts with RAB6A. Interacts with TCEB1. Interacts with STAT3 and FER. Interacts with TRNP1; may regulate TRNP1 proteasomal degradation. In terms of processing, phosphorylated by FER.

It is found in the cytoplasm. The protein resides in the nucleus. It localises to the golgi apparatus membrane. In terms of biological role, potential coactivator of the androgen receptor. May play critical roles in two RAB6-dependent retrograde transport processes: one from endosomes to the Golgi and the other from the Golgi to the ER. Mediates STAT3 degradation. This Mus musculus (Mouse) protein is TATA element modulatory factor (Tmf1).